Reading from the N-terminus, the 334-residue chain is DNA-directed RNA polymerase subunit alpha (334 aa).

The segment at Met1 to Leu231 is alpha N-terminal domain (alpha-NTD). Residues Glu247 to Asn334 form an alpha C-terminal domain (alpha-CTD) region.

This sequence belongs to the RNA polymerase alpha chain family. In terms of assembly, homodimer. The RNAP catalytic core consists of 2 alpha, 1 beta/beta' and 1 omega subunit. When a sigma factor is associated with the core the holoenzyme is formed, which can initiate transcription.

It catalyses the reaction RNA(n) + a ribonucleoside 5'-triphosphate = RNA(n+1) + diphosphate. Its function is as follows. DNA-dependent RNA polymerase catalyzes the transcription of DNA into RNA using the four ribonucleoside triphosphates as substrates. The sequence is that of DNA-directed RNA polymerase subunit alpha from Helicobacter hepaticus (strain ATCC 51449 / 3B1).